Reading from the N-terminus, the 622-residue chain is 1-deoxy-D-xylulose-5-phosphate synthase (622 aa).

Thiamine diphosphate-binding positions include His74 and 115 to 117 (GHS). Asp146 lines the Mg(2+) pocket. Thiamine diphosphate-binding positions include 147–148 (GA), Asn175, Tyr286, and Glu366. Asn175 contacts Mg(2+).

This sequence belongs to the transketolase family. DXPS subfamily. Homodimer. Mg(2+) serves as cofactor. It depends on thiamine diphosphate as a cofactor.

The catalysed reaction is D-glyceraldehyde 3-phosphate + pyruvate + H(+) = 1-deoxy-D-xylulose 5-phosphate + CO2. The protein operates within metabolic intermediate biosynthesis; 1-deoxy-D-xylulose 5-phosphate biosynthesis; 1-deoxy-D-xylulose 5-phosphate from D-glyceraldehyde 3-phosphate and pyruvate: step 1/1. Catalyzes the acyloin condensation reaction between C atoms 2 and 3 of pyruvate and glyceraldehyde 3-phosphate to yield 1-deoxy-D-xylulose-5-phosphate (DXP). In Carboxydothermus hydrogenoformans (strain ATCC BAA-161 / DSM 6008 / Z-2901), this protein is 1-deoxy-D-xylulose-5-phosphate synthase.